Here is a 1865-residue protein sequence, read N- to C-terminus: Dedicator of cytokinesis protein 1 (1865 aa).

The region spanning 9–70 (REEKYGVAFY…PASYIHLKEA (62 aa)) is the SH3 domain. The region spanning 425 to 609 (RNDIYVTLVQ…DSFQISTLVC (185 aa)) is the C2 DOCK-type domain. Positions 1207–1617 (YKEIEREEMY…VEKQYGVRTM (411 aa)) constitute a DOCKER domain. The segment at 1613 to 1723 (GVRTMPSGLD…FKPADSSLQQ (111 aa)) is disordered. The span at 1639–1664 (PSSSRPLSVASVSSFSSDSTPSRPGS) shows a compositional bias: low complexity. A compositionally biased stretch (basic and acidic residues) spans 1680–1694 (RSQDKLDKDDPDKEK). Serine 1681 bears the Phosphoserine mark. The interval 1687–1695 (KDDPDKEKK) is phosphoinositide-binding. Residues 1695 to 1704 (KDKKKEKRNS) show a composition bias toward basic residues. Residues 1705–1716 (KHQEIFDKEFKP) are compositionally biased toward basic and acidic residues. Residues serine 1743, serine 1756, serine 1761, and serine 1764 each carry the phosphoserine modification. Disordered regions lie at residues 1753 to 1778 (RRFSVSPASPSSQQTPPPVTPRAKLS) and 1801 to 1865 (PLPL…GIVQ). Low complexity predominate over residues 1756 to 1766 (SVSPASPSSQQ). A phosphothreonine mark is found at threonine 1767 and threonine 1772. The interaction with NCK2 second and third SH3 domain (minor) stretch occupies residues 1793 to 1819 (MDVADVPPPLPLKGNMADYGNLMENQD). Positions 1799–1805 (PPPLPLK) match the SH3-binding; interaction with CRK motif. Residues 1820-1836 (MMVSPTSPPPPPPQRQQ) form an interaction with NCK2 third SH3 domain (major) region. Residues 1825–1851 (TSPPPPPPQRQQPPPLPSKTPPPPPPK) are compositionally biased toward pro residues. An interaction with NCK2 (minor) region spans residues 1837 to 1852 (PPPLPSKTPPPPPPKT). The SH3-binding; interaction with CRK signature appears at 1838–1843 (PPLPSK). Residue serine 1858 is modified to Phosphoserine.

It belongs to the DOCK family. As to quaternary structure, interacts with the SH3 domains of CRK and NCK2 via multiple sites. Interacts with nucleotide-free RAC1 via its DOCKER domain. Interacts with ELMO1, ELMO2 and probably ELMO3 via its SH3 domain. Interacts with RAC1. Interacts with ELMO1 and ADGRB1. Identified in a complex with AUTS2 and ELMO2.

It localises to the cytoplasm. The protein localises to the membrane. Involved in cytoskeletal rearrangements required for phagocytosis of apoptotic cells and cell motility. Along with DOCK1, mediates CRK/CRKL regulation of epithelial and endothelial cell spreading and migration on type IV collagen. Functions as a guanine nucleotide exchange factor (GEF), which activates Rac Rho small GTPases by exchanging bound GDP for free GTP. Its GEF activity may be enhanced by ELMO1. This Mus musculus (Mouse) protein is Dedicator of cytokinesis protein 1 (Dock1).